Here is a 416-residue protein sequence, read N- to C-terminus: Solute carrier family 35 member D3 (416 aa).

A run of 10 helical transmembrane segments spans residues 9–29, 38–58, 64–84, 103–123, 131–151, 155–175, 187–207, 224–244, 257–277, and 280–300; these read VLGI…NILL, FSFL…SLEL, LIAV…VAVL, MYVV…VLVL, GVLA…AGDL, PIGY…LVLI, LTAQ…CSFA, AMVC…FTTL, FVGV…FSDV, and TSLF…YCVA. The disordered stretch occupies residues 334-384; it reads MEELPGEGGNGRSEGGEAAGGPAQESRQEVRGSPRGVPLVAGSSEEGSRRS. The span at 339 to 352 shows a compositional bias: gly residues; the sequence is GEGGNGRSEGGEAA.

The protein belongs to the TPT transporter family. SLC35D subfamily. As to quaternary structure, could interact with ATG14, BECN1 and PIK3C3 that form the PI3KC3-C1/AIC/autophagy initiation complex; enhancing the formation of the AIC and promoting autophagy.

It is found in the cytoplasmic vesicle. It localises to the secretory vesicle. Its subcellular location is the synaptic vesicle membrane. The protein localises to the early endosome membrane. The protein resides in the endoplasmic reticulum membrane. It catalyses the reaction UDP-alpha-D-glucose(in) = UDP-alpha-D-glucose(out). With respect to regulation, inhibited by proton uncouplers that directly abolish the proton electrochemical gradient. In terms of biological role, probable UDP-glucose transmembrane transporter involved in UDP-glucose transport from the cytosol to the lumen of synaptic vesicles. It is involved in platelet dense granules maturation. Alternatively, could function as a molecular adapter enhancing the formation of the PI3KC3-C1/AIC/autophagy initiation complex to promote autophagy in dopaminergic neurons. Could also regulate the plasma membrane localization of the D(1A) dopamine receptor/DRD1 and dopamine signaling. This chain is Solute carrier family 35 member D3, found in Homo sapiens (Human).